A 341-amino-acid polypeptide reads, in one-letter code: L-threonine 3-dehydrogenase (341 aa).

Zn(2+) is bound at residue cysteine 38. Residues threonine 40 and histidine 43 each act as charge relay system in the active site. Positions 63, 64, 93, 96, 99, and 107 each coordinate Zn(2+). NAD(+)-binding positions include isoleucine 175, aspartate 195, arginine 200, 262 to 264 (LGI), and 286 to 287 (IY).

It belongs to the zinc-containing alcohol dehydrogenase family. As to quaternary structure, homotetramer. Requires Zn(2+) as cofactor.

Its subcellular location is the cytoplasm. It carries out the reaction L-threonine + NAD(+) = (2S)-2-amino-3-oxobutanoate + NADH + H(+). The protein operates within amino-acid degradation; L-threonine degradation via oxydo-reductase pathway; glycine from L-threonine: step 1/2. In terms of biological role, catalyzes the NAD(+)-dependent oxidation of L-threonine to 2-amino-3-ketobutyrate. The sequence is that of L-threonine 3-dehydrogenase from Shewanella putrefaciens (strain CN-32 / ATCC BAA-453).